Reading from the N-terminus, the 339-residue chain is MREKLAQVVEEAEKALAGASTAEVVEEVRIRYLGKKGVLTQVLRSMGSLPAAERPVVGKLANEMKVRLEQALASRSALLKQEEKAARLAAERIDVTLPGVLPHLGSMHPLTMVRTEIENIFLGLGFQIVEGPEVELEYYNFEALNFPKDHPARDMQDTFFINDEVLLRTHTSPVQVRTFEKTAPRVPVRIIAPGKVYREDDDATHSPMFNQVEGFAVDTRITLGDLKGTLVYFVREMFGERRMRFRPSFFPFTEPSAEVDISCVICGGGGCRVCSHTGWLEILGAGMIHPRVLEVSGYDAEKVSGFAFGMGIERVAMLKYGIDNIRLFFDNDLRFLNQF.

Glutamate 254 is a Mg(2+) binding site.

This sequence belongs to the class-II aminoacyl-tRNA synthetase family. Phe-tRNA synthetase alpha subunit type 1 subfamily. As to quaternary structure, tetramer of two alpha and two beta subunits. Mg(2+) is required as a cofactor.

The protein localises to the cytoplasm. It carries out the reaction tRNA(Phe) + L-phenylalanine + ATP = L-phenylalanyl-tRNA(Phe) + AMP + diphosphate + H(+). The polypeptide is Phenylalanine--tRNA ligase alpha subunit (Desulforudis audaxviator (strain MP104C)).